Consider the following 291-residue polypeptide: Omega-amidase NIT3 (291 aa).

The CN hydrolase domain occupies 11 to 264; sequence IKVALVQLSG…EEIIYAELDP (254 aa). Phosphothreonine is present on T34. Catalysis depends on E53, which acts as the Proton acceptor. K128 acts as the Proton donor in catalysis. C169 (nucleophile) is an active-site residue.

It belongs to the carbon-nitrogen hydrolase superfamily. NIT1/NIT2 family. In terms of assembly, homodimer.

It catalyses the reaction a monoamide of a dicarboxylate + H2O = a dicarboxylate + NH4(+). In terms of biological role, possesses omega-amidase activity. The role of omega-amidase is to remove potentially toxic intermediates by converting 2-oxoglutaramate and 2-oxosuccinamate to biologically useful 2-oxoglutarate and oxaloacetate, respectively. This is Omega-amidase NIT3 (NIT3) from Saccharomyces cerevisiae (strain ATCC 204508 / S288c) (Baker's yeast).